Here is a 106-residue protein sequence, read N- to C-terminus: UPF0060 membrane protein Mrad2831_0929 (106 aa).

4 helical membrane passes run 3 to 23 (LLAY…FWAW), 30 to 50 (AWWT…LTLV), 59 to 79 (FAAY…LAEG), and 87 to 104 (LAGS…LLGR).

Belongs to the UPF0060 family.

It localises to the cell inner membrane. In Methylobacterium radiotolerans (strain ATCC 27329 / DSM 1819 / JCM 2831 / NBRC 15690 / NCIMB 10815 / 0-1), this protein is UPF0060 membrane protein Mrad2831_0929.